A 134-amino-acid chain; its full sequence is Large ribosomal subunit protein bL20 (134 aa).

The protein belongs to the bacterial ribosomal protein bL20 family.

Its function is as follows. Binds directly to 23S ribosomal RNA and is necessary for the in vitro assembly process of the 50S ribosomal subunit. It is not involved in the protein synthesizing functions of that subunit. In Allorhizobium ampelinum (strain ATCC BAA-846 / DSM 112012 / S4) (Agrobacterium vitis (strain S4)), this protein is Large ribosomal subunit protein bL20.